A 1461-amino-acid chain; its full sequence is Selection and upkeep of intraepithelial T-cells protein 5 (1461 aa).

The first 24 residues, 1–24, serve as a signal peptide directing secretion; sequence MGAVGIPLTAHCVVLFLLQMVALS. At 25–1306 the chain is on the extracellular side; the sequence is SEQFTVNGLE…CNKRNPFWKK (1282 aa). In terms of domain architecture, Ig-like V-type spans 26–139; it reads EQFTVNGLES…FYEEHIIDVK (114 aa). 2 disulfides stabilise this stretch: C49–C123 and C163–C217. Positions 142 to 231 constitute an Ig-like C1-type domain; the sequence is ATSSDIQILM…FVTHQEESIS (90 aa). The N-linked (GlcNAc...) asparagine glycan is linked to N200. Residues 1307-1327 form a helical membrane-spanning segment; it reads YALDLGISVFTIIVVTLIMHL. The Cytoplasmic portion of the chain corresponds to 1328-1345; sequence KQREADQHFELNTLWSKD. A helical membrane pass occupies residues 1346 to 1366; the sequence is TSVILCVLIMFNNRLKALIYF. The Extracellular portion of the chain corresponds to 1367–1387; sequence RLYGFSPPGKAHKYIVNYILR. Residues 1388–1408 traverse the membrane as a helical segment; that stretch reads FSHPVFCIVYSATILYMYLQI. The Cytoplasmic segment spans residues 1409–1427; it reads QNKDSLFSLYNSWMVEMEM. Residues 1428 to 1448 traverse the membrane as a helical segment; the sequence is VLIFLLVIFNVKNIATVLLYF. Over 1449-1461 the chain is Extracellular; sequence DSTTLRLFFWIKG.

Belongs to the SKINT family. As to expression, expressed in skin and, to a lower extent, testis.

Its subcellular location is the membrane. Functionally, may act by engaging a cell surface molecule on immature T-cells in the embryonic thymus. The chain is Selection and upkeep of intraepithelial T-cells protein 5 (Skint5) from Mus musculus (Mouse).